The sequence spans 1121 residues: MNSIDAVVRYSPLRNNLCNLPSAITTMLFSADFNIQQIIVELSWVPHQRAAQRRIAYCGWAGGITKTSSSNPVIEIDRSLASAIDLQENVNVTVNVHIDAVKAITVELEPVTSNDWEIVETHAQVLETYLLNQTRCVYPNQVLVVYPTPQTTARLLVKKIEPEVSTFAQLFNDTEVQIAPKVQKRPSISSVRSDSSGHRIRRVRSSTSTATGRRSVTNNGEVLPSMLRRSITLPNNTYAHVNDSKSGGYKVYCNLNELIPALQNAHFVSVSVLVGPGTPDRTGLTSSKIKQLNDSIDQAAQTQTNAAGSSHPPESSYTETGKVIAELVHDSKSPKGNVGLSELLACSLGIENTVGNLISLEQARKPLIKNPLDTLLTQLMQLLSPLLDSCTFTNCVKLPKIGTLLPNGGLLQFKRIKSGWTTPLGKDNVSLEIGEEILRPESFIPSYDLLPDRKTHVRTQSDQYPTAQENLIESLSKIASGGSLLFGTSGSGKSLVISQVAQIVTNKGHFVKLLNCDKIMSESYNNLRGIFEDIFSEVSWKAPSLLILEDLDSLIPAEQEHSDSSQSRQLSEYFISKLSALSINRDITILASSKSKESLNSLIFTTHLIEHDFQLRAPDKEARKQILQSYLDTLNVFCSEGELLNNIAVETEGYLPKDLKVLCDRAYHDLISRDILADSDSELDIEESSTPILNGSVGDIANKQSEIENGISGLELTNNSSSTIAVDKHGATIQKDNFDSALSGYIPQSLRGVKLQKSDVRWDDIGGLRDAKSILLETLEWPTKYAPIFSSCPLRLRSGILLYGYPGCGKTLLASAVAAQCGLNFISIKGPEILNKYIGASEQSVRELFERAQAAKPCILFFDEFDSIAPKRGHDSTGVTDRVVNQMLTQMDGAEGLDGVYVLAATSRPDLIDSALLRPGRLDKSVICDMPDFDDRLDILQSVTRNMNVSKSVNLSSVAGECSGFSGADLQALAYNAYLKAVHEKLTKDESMAMAGEMDDNDDKKRMVECFQFSGNTEKKSLIELKPSDRATVIKKLEHLYQGNGNHAEGETKSKLATTAANSVIITSKDFEDSLSETKQSISQSEKRKLEAIYQQFISGRDGNMPDGTASNEIGARSTLM.

Disordered regions lie at residues 187–221 and 1099–1121; these read SISS…NNGE and SGRD…STLM. Low complexity predominate over residues 205 to 217; that stretch reads SSTSTATGRRSVT.

It belongs to the AAA ATPase family. As to quaternary structure, interacts with PEX6; forming the PEX1-PEX6 AAA ATPase complex, which is composed of a heterohexamer formed by a trimer of PEX1-PEX6 dimers.

Its subcellular location is the membrane. It carries out the reaction ATP + H2O = ADP + phosphate + H(+). In terms of biological role, component of the PEX1-PEX6 AAA ATPase complex involved in peroxisome biosynthesis. The complex acts as a protein dislocase complex that mediates the ATP-dependent extraction of the PEX5 receptor from peroxisomal membranes, an essential step for PEX5 recycling. Specifically recognizes PEX5 monoubiquitinated at 'Cys-6', and pulls it out of the peroxisome lumen through the PEX2-PEX10-PEX12 retrotranslocation channel. Extraction by the PEX1-PEX6 AAA ATPase complex is accompanied by unfolding of the TPR repeats and release of bound cargo from PEX5. In Komagataella phaffii (strain GS115 / ATCC 20864) (Yeast), this protein is Peroxisomal ATPase PEX1.